The primary structure comprises 122 residues: Small ribosomal subunit protein uS13 (122 aa).

Residues 89–122 (GLRHRRGLPARGQRTKTNARTRKGPRRGVAGKRK) are disordered.

This sequence belongs to the universal ribosomal protein uS13 family. Part of the 30S ribosomal subunit. Forms a loose heterodimer with protein S19. Forms two bridges to the 50S subunit in the 70S ribosome.

In terms of biological role, located at the top of the head of the 30S subunit, it contacts several helices of the 16S rRNA. In the 70S ribosome it contacts the 23S rRNA (bridge B1a) and protein L5 of the 50S subunit (bridge B1b), connecting the 2 subunits; these bridges are implicated in subunit movement. Contacts the tRNAs in the A and P-sites. This Oleidesulfovibrio alaskensis (strain ATCC BAA-1058 / DSM 17464 / G20) (Desulfovibrio alaskensis) protein is Small ribosomal subunit protein uS13.